Here is a 95-residue protein sequence, read N- to C-terminus: Aspartyl/glutamyl-tRNA(Asn/Gln) amidotransferase subunit C (95 aa).

This sequence belongs to the GatC family. Heterotrimer of A, B and C subunits.

It catalyses the reaction L-glutamyl-tRNA(Gln) + L-glutamine + ATP + H2O = L-glutaminyl-tRNA(Gln) + L-glutamate + ADP + phosphate + H(+). The enzyme catalyses L-aspartyl-tRNA(Asn) + L-glutamine + ATP + H2O = L-asparaginyl-tRNA(Asn) + L-glutamate + ADP + phosphate + 2 H(+). In terms of biological role, allows the formation of correctly charged Asn-tRNA(Asn) or Gln-tRNA(Gln) through the transamidation of misacylated Asp-tRNA(Asn) or Glu-tRNA(Gln) in organisms which lack either or both of asparaginyl-tRNA or glutaminyl-tRNA synthetases. The reaction takes place in the presence of glutamine and ATP through an activated phospho-Asp-tRNA(Asn) or phospho-Glu-tRNA(Gln). The chain is Aspartyl/glutamyl-tRNA(Asn/Gln) amidotransferase subunit C from Thermodesulfovibrio yellowstonii (strain ATCC 51303 / DSM 11347 / YP87).